Consider the following 314-residue polypeptide: MSGDRLEFENPIEDAVSRLRFSPQSNNLLVASWDSYLRLYDVESSSLSLELNSQAALLDCCFENESTSFTSGSDGFIRRYDLNAGTVDTIGRHDDISTSIVYSYEKGEVISTGFDEKIKFWDTRQRESLVFSTDAGGAVGCVTVSGNNLVVCVDASMHIYDLRNLDEAFQSYASQVEVPIRCITSVPYSRGYAVGSVDGRVAVDFPNTSCSSEIKYSFRCHPKSRNGRLDGVCINAIEFSPCGSGTFVTGDNEGYVISWNAKSRRRLNELPRYSNSIASLAFDHTGELLAIASSHTYQDAKEKEEAPQVFIHRL.

WD repeat units lie at residues 11–50, 52–90, 92–131, 134–173, 176–215, 229–269, and 272–311; these read PIEDAVSRLRFSPQSNNLLVASWDSYLRLYDVESSSLSLE, NSQAALLDCCFENESTSFTSGSDGFIRRYDLNAGTVDTI, RHDDISTSIVYSYEKGEVISTGFDEKIKFWDTRQRESLVF, DAGGAVGCVTVSGNNLVVCVDASMHIYDLRNLDEAFQSYA, VEVPIRCITSVPYSRGYAVGSVDGRVAVDFPNTSCSSEIK, LDGV…RLNE, and RYSNSIASLAFDHTGELLAIASSHTYQDAKEKEEAPQVFI.

Belongs to the WD repeat BUB3 family. In terms of assembly, part of the mitotic checkpoint complex (MCC).

It is found in the nucleus. The protein localises to the chromosome. It localises to the centromere. Its subcellular location is the kinetochore. The protein resides in the cytoplasm. It is found in the cytoskeleton. The protein localises to the phragmoplast. It localises to the spindle. Has a dual function in spindle-assembly checkpoint signaling and in promoting the establishment of correct kinetochore-microtubule (K-MT) attachments. Promotes the formation of stable end-on bipolar attachments. Necessary for kinetochore localization of BUB1. The BUB1/BUB3 complex plays a role in the inhibition of anaphase-promoting complex or cyclosome (APC/C) when spindle-assembly checkpoint is activated and inhibits the ubiquitin ligase activity of APC/C by phosphorylating its activator CDC20. This is Mitotic checkpoint protein BUB3.3 (BUB3.3) from Arabidopsis thaliana (Mouse-ear cress).